A 103-amino-acid chain; its full sequence is uncharacterized protein (103 aa).

Residues 33-57 (GYVAAIVAGPVSMSPLDWICPLLAI) traverse the membrane as a helical segment.

It localises to the membrane. This is an uncharacterized protein from Sinorhizobium fredii (strain NBRC 101917 / NGR234).